Consider the following 298-residue polypeptide: N-acetylmuramic acid 6-phosphate etherase (298 aa).

Residues 55 to 218 (IHAQVSGGGR…STGLMIKSGK (164 aa)) enclose the SIS domain. Catalysis depends on Glu83, which acts as the Proton donor. The active site involves Glu114.

This sequence belongs to the GCKR-like family. MurNAc-6-P etherase subfamily. Homodimer.

It carries out the reaction N-acetyl-D-muramate 6-phosphate + H2O = N-acetyl-D-glucosamine 6-phosphate + (R)-lactate. The protein operates within amino-sugar metabolism; 1,6-anhydro-N-acetylmuramate degradation. Its pathway is amino-sugar metabolism; N-acetylmuramate degradation. It functions in the pathway cell wall biogenesis; peptidoglycan recycling. Its function is as follows. Specifically catalyzes the cleavage of the D-lactyl ether substituent of MurNAc 6-phosphate, producing GlcNAc 6-phosphate and D-lactate. Together with AnmK, is also required for the utilization of anhydro-N-acetylmuramic acid (anhMurNAc) either imported from the medium or derived from its own cell wall murein, and thus plays a role in cell wall recycling. This chain is N-acetylmuramic acid 6-phosphate etherase, found in Escherichia coli O81 (strain ED1a).